We begin with the raw amino-acid sequence, 181 residues long: MRILGIDPGLRRTGFGVVDAEGSRLRYIASGTIVVPPDLALAQRLKVILDNLREVARETRPDVAALEIVFLNANPSSTLLLGHARGAALCALAESGLDVHEYTALQIKKSTVGTGRAAKEQVQMMVQHLLSLNGTPAPDSADALACAICHAHTGPLQERLSPLAATSRSGKSRIRKGRLLG.

Residues D7, E67, and D139 contribute to the active site. Mg(2+)-binding residues include D7, E67, and D139.

The protein belongs to the RuvC family. Homodimer which binds Holliday junction (HJ) DNA. The HJ becomes 2-fold symmetrical on binding to RuvC with unstacked arms; it has a different conformation from HJ DNA in complex with RuvA. In the full resolvosome a probable DNA-RuvA(4)-RuvB(12)-RuvC(2) complex forms which resolves the HJ. The cofactor is Mg(2+).

The protein resides in the cytoplasm. It catalyses the reaction Endonucleolytic cleavage at a junction such as a reciprocal single-stranded crossover between two homologous DNA duplexes (Holliday junction).. In terms of biological role, the RuvA-RuvB-RuvC complex processes Holliday junction (HJ) DNA during genetic recombination and DNA repair. Endonuclease that resolves HJ intermediates. Cleaves cruciform DNA by making single-stranded nicks across the HJ at symmetrical positions within the homologous arms, yielding a 5'-phosphate and a 3'-hydroxyl group; requires a central core of homology in the junction. The consensus cleavage sequence is 5'-(A/T)TT(C/G)-3'. Cleavage occurs on the 3'-side of the TT dinucleotide at the point of strand exchange. HJ branch migration catalyzed by RuvA-RuvB allows RuvC to scan DNA until it finds its consensus sequence, where it cleaves and resolves the cruciform DNA. The polypeptide is Crossover junction endodeoxyribonuclease RuvC (Bordetella avium (strain 197N)).